The following is a 245-amino-acid chain: tRNA (guanine-N(1)-)-methyltransferase (245 aa).

S-adenosyl-L-methionine contacts are provided by residues Gly113 and 133–138 (IGDYVL).

The protein belongs to the RNA methyltransferase TrmD family. As to quaternary structure, homodimer.

The protein localises to the cytoplasm. The enzyme catalyses guanosine(37) in tRNA + S-adenosyl-L-methionine = N(1)-methylguanosine(37) in tRNA + S-adenosyl-L-homocysteine + H(+). Its function is as follows. Specifically methylates guanosine-37 in various tRNAs. The sequence is that of tRNA (guanine-N(1)-)-methyltransferase from Actinobacillus succinogenes (strain ATCC 55618 / DSM 22257 / CCUG 43843 / 130Z).